Consider the following 393-residue polypeptide: Methylthioribose kinase (393 aa).

Residues N38, K53, and 107–109 contribute to the ATP site; that span reads EDL. Residue D225 participates in substrate binding. Residue 242 to 244 coordinates ATP; the sequence is DPE. R332 provides a ligand contact to substrate.

The protein belongs to the methylthioribose kinase family. As to quaternary structure, homodimer.

It catalyses the reaction 5-(methylsulfanyl)-D-ribose + ATP = 5-(methylsulfanyl)-alpha-D-ribose 1-phosphate + ADP + H(+). It participates in amino-acid biosynthesis; L-methionine biosynthesis via salvage pathway; S-methyl-5-thio-alpha-D-ribose 1-phosphate from S-methyl-5'-thioadenosine (hydrolase route): step 2/2. Functionally, catalyzes the phosphorylation of methylthioribose into methylthioribose-1-phosphate. The protein is Methylthioribose kinase of Bacillus thuringiensis subsp. konkukian (strain 97-27).